The following is a 477-amino-acid chain: (R)-2-hydroxyglutaryl-CoA dehydratase, subunit alpha (477 aa).

The protein belongs to the FldB/FldC dehydratase alpha/beta subunit family. The (R)-2-hydroxyglutaryl-CoA dehydratase enzyme system is a heterodimer composed of an alpha subunit (HgdA) and a beta subunit (HgdB). Requires [4Fe-4S] cluster as cofactor. The cofactor is FMN. Mg(2+) is required as a cofactor.

The protein localises to the cytoplasm. The catalysed reaction is (R)-2-hydroxyglutaryl-CoA = (2E)-glutaconyl-CoA + H2O. The protein operates within amino-acid degradation; L-glutamate degradation via hydroxyglutarate pathway; crotonoyl-CoA from L-glutamate: step 4/5. Activated by the HgdC. Reversibly inactivated by oxidants such as 2-nitrophenol, 3-nitrophenol, 4-nitrophenol, 4-nitrobenzoate, carbonyl cyanide 4-(trifluoromethoxy)phenylhydrazone (FCCP) and chloramphenicol. Irreversibly inactivated by oxidants such as hydroxylamine and nitrite. Involved in the fermentation of L-glutamate via the hydroxyglutarate pathway. Catalyzes the reversible syn-elimination of water from (R)-2-hydroxyglutaryl-CoA to yield (E)-glutaconyl-CoA. The dehydration mechanism involves a transient one electron reduction of the thioester from (R)-2-hydroxyglutaryl-CoA, generating a ketyl radical. Prior to (E)-glutaconyl-CoA formation, the ketyl radical is subsequently reoxidized by electron transfer back to the HgdA-HgdB complex (CompD) to avoid change in oxidation state of the substrate. The appropriate redox state of dehydratase HgdA-HgdB complex (CompD) is maintained by HgdC (CompA) via hydrolysis of ATP and ATP-dependent electron transfer. Since the electron is recycled, the dehydratase is able to perform several turnovers with only catalytic amounts of ATP and substoichiometric amounts of HgdC (CompA). The sequence is that of (R)-2-hydroxyglutaryl-CoA dehydratase, subunit alpha from Acidaminococcus fermentans (strain ATCC 25085 / DSM 20731 / CCUG 9996 / CIP 106432 / VR4).